The sequence spans 598 residues: Elongation factor 4 (598 aa).

A tr-type G domain is found at 5-187 (ANIRNFSIIA…ALVEFIPAPT (183 aa)). Residues 17–22 (DHGKST) and 134–137 (NKID) contribute to the GTP site.

This sequence belongs to the TRAFAC class translation factor GTPase superfamily. Classic translation factor GTPase family. LepA subfamily.

It is found in the cell inner membrane. It catalyses the reaction GTP + H2O = GDP + phosphate + H(+). Required for accurate and efficient protein synthesis under certain stress conditions. May act as a fidelity factor of the translation reaction, by catalyzing a one-codon backward translocation of tRNAs on improperly translocated ribosomes. Back-translocation proceeds from a post-translocation (POST) complex to a pre-translocation (PRE) complex, thus giving elongation factor G a second chance to translocate the tRNAs correctly. Binds to ribosomes in a GTP-dependent manner. The chain is Elongation factor 4 from Psychrobacter arcticus (strain DSM 17307 / VKM B-2377 / 273-4).